The following is a 447-amino-acid chain: Signal recognition particle 54 kDa protein (447 aa).

GTP-binding positions include 103–110, 185–189, and 245–248; these read GVQGSGKT, DTAGR, and TKMD.

Belongs to the GTP-binding SRP family. SRP54 subfamily. As to quaternary structure, part of the signal recognition particle protein translocation system, which is composed of SRP and FtsY. Archaeal SRP consists of a 7S RNA molecule of 300 nucleotides and two protein subunits: SRP54 and SRP19.

It localises to the cytoplasm. It carries out the reaction GTP + H2O = GDP + phosphate + H(+). Its function is as follows. Involved in targeting and insertion of nascent membrane proteins into the cytoplasmic membrane. Binds to the hydrophobic signal sequence of the ribosome-nascent chain (RNC) as it emerges from the ribosomes. The SRP-RNC complex is then targeted to the cytoplasmic membrane where it interacts with the SRP receptor FtsY. This chain is Signal recognition particle 54 kDa protein, found in Saccharolobus solfataricus (strain ATCC 35092 / DSM 1617 / JCM 11322 / P2) (Sulfolobus solfataricus).